Here is a 634-residue protein sequence, read N- to C-terminus: Glutamate--tRNA ligase (634 aa).

The 'HIGH' region signature appears at 108-118 (PNPSGPLHIGH).

It belongs to the class-I aminoacyl-tRNA synthetase family. Glutamate--tRNA ligase type 2 subfamily.

The protein localises to the cytoplasm. The enzyme catalyses tRNA(Glu) + L-glutamate + ATP = L-glutamyl-tRNA(Glu) + AMP + diphosphate. Functionally, catalyzes the attachment of glutamate to tRNA(Glu) in a two-step reaction: glutamate is first activated by ATP to form Glu-AMP and then transferred to the acceptor end of tRNA(Glu). This Methanoregula boonei (strain DSM 21154 / JCM 14090 / 6A8) protein is Glutamate--tRNA ligase.